A 293-amino-acid polypeptide reads, in one-letter code: Small ribosomal subunit biogenesis GTPase RsgA (293 aa).

A CP-type G domain is found at 63–223; sequence KNWLVRPPIA…VADTPGFSAL (161 aa). Residues 112-115 and 166-174 each bind GTP; these read NKMD and GQSGVGKSS. The Zn(2+) site is built by Cys247, Cys252, His254, and Cys260.

It belongs to the TRAFAC class YlqF/YawG GTPase family. RsgA subfamily. As to quaternary structure, monomer. Associates with 30S ribosomal subunit, binds 16S rRNA. The cofactor is Zn(2+).

Its subcellular location is the cytoplasm. Its function is as follows. One of several proteins that assist in the late maturation steps of the functional core of the 30S ribosomal subunit. Helps release RbfA from mature subunits. May play a role in the assembly of ribosomal proteins into the subunit. Circularly permuted GTPase that catalyzes slow GTP hydrolysis, GTPase activity is stimulated by the 30S ribosomal subunit. In Geobacillus sp. (strain WCH70), this protein is Small ribosomal subunit biogenesis GTPase RsgA.